The following is a 153-amino-acid chain: UPAR/Ly6 domain-containing protein cold (153 aa).

The first 25 residues, 1-25, serve as a signal peptide directing secretion; that stretch reads MKSWEIAVVLVAAVYLCSQVNFVAG. The Extracellular segment spans residues 26 to 130; the sequence is LECYVCSNQT…FVISGAPSRQ (105 aa). 6 disulfide bridges follow: C28–C55, C31–C41, C48–C81, C87–C112, C99–C109, and C113–C118. N33 is a glycosylation site (N-linked (GlcNAc...) asparagine). S124 carries GPI-anchor amidated serine lipidation. Positions 125 to 153 are cleaved as a propeptide — removed in mature form; the sequence is GAPSRQGYGVCLTLLTALLGLGSWLIPRS. A helical transmembrane segment spans residues 131–151; the sequence is GYGVCLTLLTALLGLGSWLIP. At 152-153 the chain is on the cytoplasmic side; sequence RS.

Belongs to the snake toxin-like superfamily. GPI-anchored. As to expression, expressed in all tissues that form septate junctions, including hindgut, trachea, epidermis and dorsal pouch. Expressed in subperineurial glial cells that form the hemolymph-brain barrier of the central nervous system.

The protein resides in the endosome membrane. It localises to the endoplasmic reticulum membrane. It is found in the cell membrane. Its subcellular location is the cell junction. The protein localises to the septate junction. Functionally, required for septate junction assembly, possibly by organizing the preassembly and transport of septate junction proteins such as dlg1/disks large 1 and Nrx-IV/Neurexin-IV. Involved in paracellular barrier functions of trachea, hindgut and salivary gland mediated by epithelial cell septate junctions. Involved in paracellular barrier functions of the hemolymph-brain barrier (insect blood-brain barrier) mediated by glial cell septate junctions. Required for maintenance of septate junctions in imaginal disk epithelial cells. Involved in the epithelial cell wound-healing response. Directly or indirectly mediates cell-cell adhesion during septate junction formation. This Drosophila melanogaster (Fruit fly) protein is UPAR/Ly6 domain-containing protein cold.